The sequence spans 351 residues: DNA-directed RNA polymerase subunit alpha (351 aa).

Positions 1 to 236 (MSVNTKNWQE…DQLTLFVHFE (236 aa)) are alpha N-terminal domain (alpha-NTD). Residues 256-351 (DDANQLNRYL…AKKLEQELLG (96 aa)) are alpha C-terminal domain (alpha-CTD).

The protein belongs to the RNA polymerase alpha chain family. In terms of assembly, homodimer. The RNAP catalytic core consists of 2 alpha, 1 beta, 1 beta' and 1 omega subunit. When a sigma factor is associated with the core the holoenzyme is formed, which can initiate transcription.

The catalysed reaction is RNA(n) + a ribonucleoside 5'-triphosphate = RNA(n+1) + diphosphate. Functionally, DNA-dependent RNA polymerase catalyzes the transcription of DNA into RNA using the four ribonucleoside triphosphates as substrates. In Erythrobacter litoralis (strain HTCC2594), this protein is DNA-directed RNA polymerase subunit alpha.